A 558-amino-acid polypeptide reads, in one-letter code: Cytochrome P450 monooxygenase sdnT (558 aa).

Residues 21–41 (IISLTTCFVCAFAVSFVALAI) form a helical membrane-spanning segment. The interval 298–317 (QNAGSNTRPKPPKRKQDTQP) is disordered. N-linked (GlcNAc...) asparagine glycans are attached at residues N464 and N495. C505 lines the heme pocket.

Belongs to the cytochrome P450 family. It depends on heme as a cofactor.

The protein localises to the membrane. It functions in the pathway antibiotic biosynthesis. Functionally, cytochrome P450 monooxygenase; part of the gene cluster that mediates the biosynthesis of sordarin and hypoxysordarin, glycoside antibiotics with a unique tetracyclic diterpene aglycone structure. First, the geranylgeranyl diphosphate synthase sdnC constructs GGDP from farnesyl diphosphate and isopentenyl diphosphate. The diterpene cyclase sdnA then catalyzes the cyclization of GGDP to afford cycloaraneosene. Cycloaraneosene is then hydroxylated four times by the putative cytochrome P450 monooxygenases sdnB, sdnE, sdnF and sdnH to give a hydroxylated cycloaraneosene derivative such as cycloaraneosene-8,9,13,19-tetraol. Although the order of the hydroxylations is unclear, at least C8, C9 and C13 of the cycloaraneosene skeleton are hydroxylated before the sordaricin formation. Dehydration of the 13-hydroxy group of the hydroxylated cycloaraneosene derivative might be catalyzed by an unassigned hypothetical protein such as sdnG and sdnP to construct the cyclopentadiene moiety. The FAD-dependent oxidoreductase sdnN is proposed to catalyze the oxidation at C9 of the hydroxylated cycloaraneosene derivative and also catalyze the Baeyer-Villiger oxidation to give the lactone intermediate. The presumed lactone intermediate would be hydrolyzed to give an acrolein moiety and a carboxylate moiety. Then, [4+2]cycloaddition would occur between the acrolein moiety and the cyclopentadiene moiety to give sordaricin. SdnN might also be involved in the [4+2]cycloaddition after the hypothesized oxidation to accommodate the oxidized product and prompt the [4+2]cycloaddition. GDP-6-deoxy-D-altrose may be biosynthesized from GDP-D-mannose by the putative GDP-mannose-4,6-dehydratase sdnI and the short-chain dehydrogenase sdnK. The glycosyltransferase sdnJ catalyzes the attachment of 6-deoxy-D-altrose onto the 19-hydroxy group of sordaricin to give 4'-O-demethylsordarin. The methyltransferase sdnD would complete the biosynthesis of sordarin. Sordarin can be further modified into hypoxysordarin. The unique acyl chain at the 3'-hydroxy group of hypoxysordarin would be constructed by an iterative type I PKS sdnO and the trans-acting polyketide methyltransferase sdnL. SdnL would be responsible for the introduction of an alpha-methyl group of the polyketide chain. Alternatively, the beta-lactamase-like protein sdnR might be responsible for the cleavage and transfer of the polyketide chain from the PKS sdnO to sordarin. Two putative cytochrome P450 monooxygenases, sdnQ and sdnT, might catalyze the epoxidations of the polyketide chain to complete the biosynthesis of hypoxysordarin. Transcriptional regulators sdnM and sdnS are presumably encoded for the transcriptional regulation of the expression of the sdn gene cluster. The chain is Cytochrome P450 monooxygenase sdnT from Sordaria araneosa (Pleurage araneosa).